The following is a 391-amino-acid chain: Acetylgalactosaminyl-O-glycosyl-glycoprotein beta-1,3-N-acetylglucosaminyltransferase (391 aa).

Over 1 to 11 (MALPSSRRFKS) the chain is Cytoplasmic. The chain crosses the membrane as a helical; Signal-anchor for type II membrane protein span at residues 12 to 32 (PTTLAFFLVGVTLVVLNQWFL). Over 33 to 391 (QEHRQEKAKG…TAGEQNPDAH (359 aa)) the chain is Lumenal. Asn-68 and Asn-191 each carry an N-linked (GlcNAc...) asparagine glycan.

It belongs to the glycosyltransferase 31 family.

Its subcellular location is the golgi apparatus membrane. It carries out the reaction a 3-O-[N-acetyl-alpha-D-galactosaminyl]-L-threonyl-[protein] + UDP-N-acetyl-alpha-D-glucosamine = a 3-O-[N-acetyl-beta-D-glucosaminyl-(1-&gt;3)-N-acetyl-alpha-D-galactosaminyl]-L-threonyl-[protein] + UDP + H(+). It catalyses the reaction a 3-O-[N-acetyl-alpha-D-galactosaminyl]-L-seryl-[protein] + UDP-N-acetyl-alpha-D-glucosamine = 3-O-[N-acetyl-beta-D-glucosaminyl-(1-&gt;3)-N-acetyl-alpha-D-galactosaminyl]-L-seryl-[protein] + UDP + H(+). Its pathway is protein modification; protein glycosylation. Beta-1,3-N-acetylglucosaminyltransferase that synthesizes the core 3 structure of the O-glycan, an important precursor in the biosynthesis of mucin-type glycoproteins. Plays an important role in the synthesis of mucin-type O-glycans in digestive organs. The protein is Acetylgalactosaminyl-O-glycosyl-glycoprotein beta-1,3-N-acetylglucosaminyltransferase (B3gnt6) of Mus musculus (Mouse).